A 349-amino-acid chain; its full sequence is Green-sensitive opsin-1 (349 aa).

The Extracellular portion of the chain corresponds to 1–36; it reads MNGTEGKNFYVPMSNRTGLVRSPFEYPQYYLAEPWQ. N-linked (GlcNAc...) asparagine glycosylation is found at Asn-2 and Asn-15. The chain crosses the membrane as a helical span at residues 37 to 61; that stretch reads FKILALYLFFLMSMGLPINGLTLVV. The Cytoplasmic portion of the chain corresponds to 62-73; the sequence is TAQHKKLRQPLN. A helical transmembrane segment spans residues 74–99; the sequence is FILVNLAVAGTIMVCFGFTVTFYTAI. Residues 100 to 113 lie on the Extracellular side of the membrane; that stretch reads NGYFVLGPTGCAVE. A disulfide bridge connects residues Cys-110 and Cys-187. Residues 114 to 133 traverse the membrane as a helical segment; that stretch reads GFMATLGGEVALWSLVVLAI. Topologically, residues 134 to 152 are cytoplasmic; sequence ERYIVVCKPMGSFKFSSSH. A helical membrane pass occupies residues 153 to 176; the sequence is AFAGIAFTWVMALACAAPPLFGWS. The Extracellular portion of the chain corresponds to 177–202; it reads RYIPEGMQCSCGPDYYTLNPDYNNES. The helical transmembrane segment at 203–230 threads the bilayer; it reads YVIYMFVCHFILPVAVIFFTYGRLVCTV. Topologically, residues 231-252 are cytoplasmic; it reads KAAAAQQQDSASTQKAEREVTK. The helical transmembrane segment at 253 to 276 threads the bilayer; that stretch reads MVILMVFGFLIAWTPYATVAAWIF. Residues 277–284 are Extracellular-facing; sequence FNKGADFS. Residues 285–309 traverse the membrane as a helical segment; sequence AKFMAIPAFFSKSSALYNPVIYVLL. Lys-296 is modified (N6-(retinylidene)lysine). At 310 to 349 the chain is on the cytoplasmic side; it reads NKQFRNCMLTTIFCGKNPLGDDESSTVSTSKTEVSSVSPA. Positions 329–349 are disordered; it reads GDDESSTVSTSKTEVSSVSPA. Residues 334-349 are compositionally biased toward low complexity; that stretch reads STVSTSKTEVSSVSPA.

This sequence belongs to the G-protein coupled receptor 1 family. Opsin subfamily. Phosphorylated on some or all of the serine and threonine residues present in the C-terminal region. In terms of tissue distribution, the color pigments are found in the cone photoreceptor cells.

The protein localises to the membrane. Its function is as follows. Visual pigments are the light-absorbing molecules that mediate vision. They consist of an apoprotein, opsin, covalently linked to cis-retinal. In Carassius auratus (Goldfish), this protein is Green-sensitive opsin-1.